The following is a 155-amino-acid chain: MRIKLVAVGSKMPRWVEDGWQEYVKRLPSELPLELHEIPLNTRGKNADVARLIRQEGEAMLGKVQPGERIVTLEVHGKPWSTEQLAAELERWRLDARNVNLMVGGPEGLAPEVCARSEQRWSLSPLTLPHPLVRILIGEQIYRAWTLLSGHPYHK.

S-adenosyl-L-methionine is bound by residues L73, G104, and 123 to 128 (LSPLTL).

This sequence belongs to the RNA methyltransferase RlmH family. As to quaternary structure, homodimer.

The protein localises to the cytoplasm. It catalyses the reaction pseudouridine(1915) in 23S rRNA + S-adenosyl-L-methionine = N(3)-methylpseudouridine(1915) in 23S rRNA + S-adenosyl-L-homocysteine + H(+). Its function is as follows. Specifically methylates the pseudouridine at position 1915 (m3Psi1915) in 23S rRNA. This is Ribosomal RNA large subunit methyltransferase H from Stutzerimonas stutzeri (strain A1501) (Pseudomonas stutzeri).